A 260-amino-acid chain; its full sequence is Flap endonuclease Xni (260 aa).

D105 is a Mg(2+) binding site. A 5'-3' exonuclease domain is found at 164–259 (NQFLDLMALA…VNGPANTQQA (96 aa)). 5 residues coordinate K(+): L172, A173, P181, I183, and I186. Residues 185-190 (GIGPKS) form an interaction with DNA region.

The protein belongs to the Xni family. Mg(2+) is required as a cofactor. The cofactor is K(+).

Functionally, has flap endonuclease activity. During DNA replication, flap endonucleases cleave the 5'-overhanging flap structure that is generated by displacement synthesis when DNA polymerase encounters the 5'-end of a downstream Okazaki fragment. This chain is Flap endonuclease Xni, found in Shewanella sp. (strain MR-4).